The following is a 92-amino-acid chain: Cell division topological specificity factor (92 aa).

Belongs to the MinE family.

In terms of biological role, prevents the cell division inhibition by proteins MinC and MinD at internal division sites while permitting inhibition at polar sites. This ensures cell division at the proper site by restricting the formation of a division septum at the midpoint of the long axis of the cell. This is Cell division topological specificity factor from Desulforamulus reducens (strain ATCC BAA-1160 / DSM 100696 / MI-1) (Desulfotomaculum reducens).